The sequence spans 479 residues: Ribosomal protein uS12 methylthiotransferase RimO (479 aa).

The tract at residues 1 to 34 is disordered; that stretch reads MTVNTFDPSKASPVTHASDSASKTPEPNAVAAPS. The segment covering 15 to 25 has biased composition (polar residues); the sequence is THASDSASKTP. Positions 39–151 constitute an MTTase N-terminal domain; sequence NRVGFVSLGC…VMGAVHGYIP (113 aa). Residues C48, C84, C113, C184, C188, and C191 each coordinate [4Fe-4S] cluster. The Radical SAM core domain occupies 170-407; sequence LTPRHYAYLK…METQQAISAA (238 aa). A TRAM domain is found at 410 to 476; sequence KQKVGYEMDV…DYDLTGIAVE (67 aa).

It belongs to the methylthiotransferase family. RimO subfamily. [4Fe-4S] cluster is required as a cofactor.

The protein localises to the cytoplasm. It carries out the reaction L-aspartate(89)-[ribosomal protein uS12]-hydrogen + (sulfur carrier)-SH + AH2 + 2 S-adenosyl-L-methionine = 3-methylsulfanyl-L-aspartate(89)-[ribosomal protein uS12]-hydrogen + (sulfur carrier)-H + 5'-deoxyadenosine + L-methionine + A + S-adenosyl-L-homocysteine + 2 H(+). Its function is as follows. Catalyzes the methylthiolation of an aspartic acid residue of ribosomal protein uS12. In Saccharophagus degradans (strain 2-40 / ATCC 43961 / DSM 17024), this protein is Ribosomal protein uS12 methylthiotransferase RimO.